Reading from the N-terminus, the 228-residue chain is Gliolectin (228 aa).

Residues 1 to 120 lie on the Cytoplasmic side of the membrane; the sequence is MLCPPMALGP…NPKAVSQAPR (120 aa). Residues 121-137 form a helical; Signal-anchor for type II membrane protein membrane-spanning segment; it reads GMALTPAQISASAKLIL. Topologically, residues 138–228 are extracellular; sequence QKCPESDRKK…GTSELADQKQ (91 aa). Positions 141–228 are disordered; that stretch reads PESDRKKSNG…GTSELADQKQ (88 aa). N-linked (GlcNAc...) asparagine glycosylation is found at asparagine 149, asparagine 156, asparagine 198, asparagine 199, asparagine 205, and asparagine 218. Low complexity predominate over residues 195-213; sequence NNNNNSSSSNNNSNMNINN. A compositionally biased stretch (polar residues) spans 218–228; the sequence is NGTSELADQKQ.

As to expression, expressed by a subset of glial cells found at the midline of the embryo stage 12 nervous system. Expression is highest during the formation of the embryonic axonal commissures, a process requiring midline glial cell function (at protein level).

It is found in the membrane. Its function is as follows. Has a role in intercellular carbohydrate-mediated cell adhesion. The protein is Gliolectin of Drosophila melanogaster (Fruit fly).